The primary structure comprises 54 residues: Ribulose bisphosphate carboxylase large chain (54 aa).

The propeptide occupies methionine 1 to serine 2. An N-acetylproline modification is found at proline 3. An N6,N6,N6-trimethyllysine modification is found at lysine 14.

This sequence belongs to the RuBisCO large chain family. Type I subfamily. Heterohexadecamer of 8 large chains and 8 small chains.

The protein localises to the plastid. Its subcellular location is the chloroplast. It carries out the reaction 2 (2R)-3-phosphoglycerate + 2 H(+) = D-ribulose 1,5-bisphosphate + CO2 + H2O. It catalyses the reaction D-ribulose 1,5-bisphosphate + O2 = 2-phosphoglycolate + (2R)-3-phosphoglycerate + 2 H(+). RuBisCO catalyzes two reactions: the carboxylation of D-ribulose 1,5-bisphosphate, the primary event in carbon dioxide fixation, as well as the oxidative fragmentation of the pentose substrate in the photorespiration process. Both reactions occur simultaneously and in competition at the same active site. The polypeptide is Ribulose bisphosphate carboxylase large chain (rbcL) (Colletia hystrix (Crucifixion thorn)).